Here is a 689-residue protein sequence, read N- to C-terminus: MIDSVKLRRDSAADFFSHYEYLCALQNSVPLPAVRACLREGVLDFNADRLRGVDWAPLLSTLKINKDLPLVSIKSFFQPWLGDTGSDMNKFCRSRVPAIRYKDVTFQLCKALKGCLSISSVLKNLELNGLILRERDLTILAKGLNKSASLVHLSLANCPIGDGGLEIICQGIKSSITLKTVNFTGCNLTWQGADHMAKILKYQTMRRHEETWAESLRYRRPDLDCMAGLRRITLNCNTLIGDLGACAFADSLSEDLWLRALDLQQCGLTNEGAKALLEALETNTTLVVLDIRKNPLIDHSMMKAVIKKVLQNGRSAKSEYQWITSPSVKEPSKTAKQKRRTIILGSGHKGKATIRIGLATKKPVSSGRKHSLGKEYYAPAPLPPGVSGFLPWRTAERAKRHRGFPLIKTRDICNQLQQPGFPVTVTVESPSSSEVEEVDDSSESVHEVPEKTSIEQEALQEKLEECLKQLKEERVIRLKVDKRVSELEHENAQLRNINFSLSEALHAQSLTNMILDDEGVLGSIENSFQKFHAFLDLLKDAGLGQLATMAGIDQSDFQLLGHPQMTSTVSNPPKEEKKALEDEKPEPKQNALGQMQNIQFQKITGDARIPLPLDSFPVPVSTPEGLGTSSNNLGVPATEQRQESFEGFIARMCSPSPDATSGTGSQRKEEELSRNSRSSSEKKTKTESH.

2 positions are modified to phosphoserine: serine 325 and serine 327. Disordered stretches follow at residues 432–451, 563–589, and 614–689; these read SSEV…VPEK, PQMT…EPKQ, and DSFP…TESH. Positions 450-505 form a coiled coil; the sequence is EKTSIEQEALQEKLEECLKQLKEERVIRLKVDKRVSELEHENAQLRNINFSLSEAL. Composition is skewed to basic and acidic residues over residues 573–587 and 666–689; these read PKEE…KPEP and QRKE…TESH.

It belongs to the CEP78 family. Interacts with PLK4. Interacts with FAM161A. Interacts with IFT20; regulating IFT20 stability and localization. Interacts with TTC21A; regulating TTC21A stability and localization. Interacts with USP16; promoting USP16-dependent deubiquitination of tektins. Interacts with DCAF1/VPRBP; promoting localization of the EDVP complex to centrosomes. Interacts with CEP350; promoting CEP78 localization to centrosome and centriole. As to expression, widely expressed. Expressed in different retinal cell types with higher expression in cone compared to rod cells (at protein level).

It localises to the cytoplasm. The protein localises to the cytoskeleton. It is found in the microtubule organizing center. The protein resides in the centrosome. Its subcellular location is the centriole. It localises to the cilium basal body. In terms of biological role, centriole wall protein that localizes to mature centrioles and regulates centriole and cilia biogenesis. Involved in centrosome duplication: required for efficient PLK4 centrosomal localization and PLK4-induced overduplication of centrioles. Involved in cilium biogenesis and controls cilium length. Acts as a regulator of protein stability by preventing ubiquitination of centrosomal proteins, such as CCP110 and tektins. Associates with the EDVP complex, preventing ubiquitination and degradation of CCP110. Promotes deubiquitination of tektin proteins (TEKT1, TEKT2, TEK3, TEKT4 and TEKT5) via its interaction with USP16. The sequence is that of Centrosomal protein of 78 kDa from Homo sapiens (Human).